We begin with the raw amino-acid sequence, 757 residues long: GTPase-activating protein GYP7 (757 aa).

The Rab-GAP TBC domain occupies 395-640 (GLEDCIRGEA…SLWEILWTDY (246 aa)). The interval 482–507 (GVGSDRLPTTRESSPETPDEADDDEF) is disordered. The segment covering 498-507 (TPDEADDDEF) has biased composition (acidic residues).

Its function is as follows. Most effectively accelerate the intrinsic GTPase activity of YPT7. It is also active, but to a lesser extent, on YPT31, YPT32 and YPT1. YPT6 and SEC4. The sequence is that of GTPase-activating protein GYP7 (GYP7) from Debaryomyces hansenii (strain ATCC 36239 / CBS 767 / BCRC 21394 / JCM 1990 / NBRC 0083 / IGC 2968) (Yeast).